Consider the following 488-residue polypeptide: UDP-N-acetylmuramoyl-L-alanyl-D-glutamate--2,6-diaminopimelate ligase (488 aa).

UDP-N-acetyl-alpha-D-muramoyl-L-alanyl-D-glutamate is bound by residues Leu24, Ser26, and 41 to 43 (HQV). 113–119 (GTNGKTT) contacts ATP. UDP-N-acetyl-alpha-D-muramoyl-L-alanyl-D-glutamate contacts are provided by residues Asn154, 155–156 (TT), Ser182, Gln188, and Arg190. Lys222 bears the N6-carboxylysine mark. Residues Arg386, 410 to 413 (DNPR), Gly461, and Glu465 contribute to the meso-2,6-diaminopimelate site. The short motif at 410–413 (DNPR) is the Meso-diaminopimelate recognition motif element.

This sequence belongs to the MurCDEF family. MurE subfamily. The cofactor is Mg(2+). In terms of processing, carboxylation is probably crucial for Mg(2+) binding and, consequently, for the gamma-phosphate positioning of ATP.

The protein localises to the cytoplasm. The enzyme catalyses UDP-N-acetyl-alpha-D-muramoyl-L-alanyl-D-glutamate + meso-2,6-diaminopimelate + ATP = UDP-N-acetyl-alpha-D-muramoyl-L-alanyl-gamma-D-glutamyl-meso-2,6-diaminopimelate + ADP + phosphate + H(+). Its pathway is cell wall biogenesis; peptidoglycan biosynthesis. Its function is as follows. Catalyzes the addition of meso-diaminopimelic acid to the nucleotide precursor UDP-N-acetylmuramoyl-L-alanyl-D-glutamate (UMAG) in the biosynthesis of bacterial cell-wall peptidoglycan. The chain is UDP-N-acetylmuramoyl-L-alanyl-D-glutamate--2,6-diaminopimelate ligase from Haemophilus influenzae (strain 86-028NP).